Consider the following 171-residue polypeptide: Peptide deformylase (171 aa).

The Fe cation site is built by Cys-91 and His-133. Glu-134 is an active-site residue. His-137 lines the Fe cation pocket.

It belongs to the polypeptide deformylase family. Requires Fe(2+) as cofactor.

The catalysed reaction is N-terminal N-formyl-L-methionyl-[peptide] + H2O = N-terminal L-methionyl-[peptide] + formate. In terms of biological role, removes the formyl group from the N-terminal Met of newly synthesized proteins. Requires at least a dipeptide for an efficient rate of reaction. N-terminal L-methionine is a prerequisite for activity but the enzyme has broad specificity at other positions. The sequence is that of Peptide deformylase from Edwardsiella ictaluri (strain 93-146).